Consider the following 66-residue polypeptide: MPKMKTHRGAAKRLRVTASGKVKRFRAYKSHLLASKTPKQKRRLRHPALVDSTDRRRVARLLPYEA.

It belongs to the bacterial ribosomal protein bL35 family.

This chain is Large ribosomal subunit protein bL35, found in Moorella thermoacetica (strain ATCC 39073 / JCM 9320).